Here is a 246-residue protein sequence, read N- to C-terminus: Transmembrane and ubiquitin-like domain-containing protein 1 (246 aa).

A required to release iHOPS from membranes region spans residues 2 to 30; it reads TLIEGVGDEVTVLFSVLACLLVLALAWVS. The helical transmembrane segment at 11-31 threads the bilayer; the sequence is VTVLFSVLACLLVLALAWVST. A disordered region spans residues 34–101; sequence AEGGDPLPQP…TPPAPDSPQE (68 aa). Over residues 40–50 the composition is skewed to pro residues; the sequence is LPQPSGTPTPS. At Thr-71 the chain carries Phosphothreonine. A Phosphoserine modification is found at Ser-73. Thr-92 is subject to Phosphothreonine. A phosphoserine mark is found at Ser-98 and Ser-127. The region spanning 103 to 176 is the Ubiquitin-like domain; the sequence is LVLRLKFLND…LHCHVSTRVG (74 aa). Transmembrane regions (helical) follow at residues 195–215 and 221–241; these read IGSL…YCQI and FPLT…LLAF.

In terms of assembly, interacts with EEF1A1, GRIA2, GRIP1, CAMLG, TUBG1. Interacts with NPM1 and CDKN2A; TMUB1 can enhance interaction between NPM1 and CDKN2A and is proposed to bridge the proteins; proposed to be mediated by iHOPS. Interacts with ERLIN2 and AMFR; TMUB1 promotes the interaction of ERLIN2 with AMFR. Processed by regulated intramembrane proteolysis (RIP)in the N-terminus to release iHOPS from membranes. As to expression, ubiquitously expressed with highest levels in mammary and thyroid glands, bone marrow and spleen; limited expression in cardiac, pancreatic and ovarian tissues.

It is found in the membrane. It localises to the postsynaptic cell membrane. The protein resides in the recycling endosome. The protein localises to the cytoplasm. Its subcellular location is the nucleus. It is found in the nucleolus. It localises to the cytoskeleton. The protein resides in the microtubule organizing center. The protein localises to the centrosome. In terms of biological role, involved in sterol-regulated ubiquitination and degradation of HMG-CoA reductase HMGCR. Involved in positive regulation of AMPA-selective glutamate receptor GRIA2 recycling to the cell surface. Acts as a negative regulator of hepatocyte growth during regeneration. Functionally, may contribute to the regulation of translation during cell-cycle progression. May contribute to the regulation of cell proliferation. May be involved in centrosome assembly. Modulates stabilization and nucleolar localization of tumor suppressor CDKN2A and enhances association between CDKN2A and NPM1. This Homo sapiens (Human) protein is Transmembrane and ubiquitin-like domain-containing protein 1 (TMUB1).